The following is a 287-amino-acid chain: Probable WRKY transcription factor 57 (287 aa).

A compositionally biased stretch (low complexity) spans 86–99; it reads TSTNNNPSATSSSS. Residues 86-137 form a disordered region; sequence TSTNNNPSATSSSSEDPAENSTASAEKTPPPETPVKEKKKAQKRIRQPRFAF. Residues 122–132 are compositionally biased toward basic residues; sequence EKKKAQKRIRQ. The segment at residues 141–206 is a DNA-binding region (WRKY); it reads SDVDNLEDGY…YEGQHCHQTI (66 aa). The segment at 248–287 is disordered; the sequence is DNNAPSPRLPRPTTEDTPAVSTPSEEGLLGDIVPQTMRNP. Residues 262–271 show a composition bias toward polar residues; it reads EDTPAVSTPS.

The protein belongs to the WRKY group II-c family.

The protein localises to the nucleus. Functionally, transcription factor. Interacts specifically with the W box (5'-(T)TGAC[CT]-3'), a frequently occurring elicitor-responsive cis-acting element. In Arabidopsis thaliana (Mouse-ear cress), this protein is Probable WRKY transcription factor 57 (WRKY57).